We begin with the raw amino-acid sequence, 306 residues long: Dermonecrotic toxin LarSicTox-alphaIB1ai (306 aa).

Residue Val-1 is a signal peptide. Positions 2-27 (RATEKFASMYFFCHSPQSAETDVAER) are excised as a propeptide. His-38 is a catalytic residue. Mg(2+)-binding residues include Glu-58 and Asp-60. The active-site Nucleophile is His-74. Disulfide bonds link Cys-78-Cys-84 and Cys-80-Cys-223. Residue Asp-118 participates in Mg(2+) binding. Asn-283 is a glycosylation site (N-linked (GlcNAc...) asparagine).

Belongs to the arthropod phospholipase D family. Class II subfamily. Requires Mg(2+) as cofactor. In terms of tissue distribution, expressed by the venom gland.

The protein resides in the secreted. It carries out the reaction an N-(acyl)-sphingosylphosphocholine = an N-(acyl)-sphingosyl-1,3-cyclic phosphate + choline. The enzyme catalyses an N-(acyl)-sphingosylphosphoethanolamine = an N-(acyl)-sphingosyl-1,3-cyclic phosphate + ethanolamine. It catalyses the reaction a 1-acyl-sn-glycero-3-phosphocholine = a 1-acyl-sn-glycero-2,3-cyclic phosphate + choline. The catalysed reaction is a 1-acyl-sn-glycero-3-phosphoethanolamine = a 1-acyl-sn-glycero-2,3-cyclic phosphate + ethanolamine. Its function is as follows. Dermonecrotic toxins cleave the phosphodiester linkage between the phosphate and headgroup of certain phospholipids (sphingolipid and lysolipid substrates), forming an alcohol (often choline) and a cyclic phosphate. This toxin acts on sphingomyelin (SM). It may also act on ceramide phosphoethanolamine (CPE), lysophosphatidylcholine (LPC) and lysophosphatidylethanolamine (LPE), but not on lysophosphatidylserine (LPS), and lysophosphatidylglycerol (LPG). It acts by transphosphatidylation, releasing exclusively cyclic phosphate products as second products. Induces dermonecrosis, hemolysis, increased vascular permeability, edema, inflammatory response, and platelet aggregation. In Loxosceles arizonica (Arizona brown spider), this protein is Dermonecrotic toxin LarSicTox-alphaIB1ai.